Consider the following 73-residue polypeptide: UPF0346 protein SSP1318 (73 aa).

Belongs to the UPF0346 family.

The protein is UPF0346 protein SSP1318 of Staphylococcus saprophyticus subsp. saprophyticus (strain ATCC 15305 / DSM 20229 / NCIMB 8711 / NCTC 7292 / S-41).